An 827-amino-acid chain; its full sequence is Rho GTPase-activating protein 6 (827 aa).

In terms of domain architecture, PH spans 18–125; the sequence is TVYKSGPLFI…WKAALEQALA (108 aa). The Rho-GAP domain occupies 172–371; the sequence is LALEEIDGSP…ALLEDYGNMI (200 aa). Disordered stretches follow at residues 379–437 and 517–561; these read CSTS…SDYA and YTTS…SSGN. The span at 401 to 412 shows a compositional bias: basic and acidic residues; it reads IVVKHPDLHTLD. Over residues 413–423 the composition is skewed to acidic residues; sequence IEEGETDDDND. Over residues 517 to 543 the composition is skewed to polar residues; sequence YTTSAEKPASKTTGSSTVNSKRSSSWG. Residues 560-684 are a coiled coil; it reads GNDELLIQRL…HQLSQQRQHH (125 aa).

Its function is as follows. Acts as a GTPase activator for the Rac-type GTPase by converting it to an inactive GDP-bound state. The polypeptide is Rho GTPase-activating protein 6 (ROPGAP6) (Arabidopsis thaliana (Mouse-ear cress)).